The primary structure comprises 213 residues: Superoxide dismutase [Mn] (213 aa).

4 residues coordinate Mn(2+): His27, His82, Asp168, and His172.

This sequence belongs to the iron/manganese superoxide dismutase family. Homodimer. Requires Mn(2+) as cofactor.

It catalyses the reaction 2 superoxide + 2 H(+) = H2O2 + O2. Destroys superoxide anion radicals which are normally produced within the cells and which are toxic to biological systems. This is Superoxide dismutase [Mn] (sodA) from Mannheimia haemolytica (Pasteurella haemolytica).